The following is a 101-amino-acid chain: Urease subunit beta (101 aa).

Belongs to the urease beta subunit family. As to quaternary structure, heterotrimer of UreA (gamma), UreB (beta) and UreC (alpha) subunits. Three heterotrimers associate to form the active enzyme.

The protein localises to the cytoplasm. The catalysed reaction is urea + 2 H2O + H(+) = hydrogencarbonate + 2 NH4(+). It participates in nitrogen metabolism; urea degradation; CO(2) and NH(3) from urea (urease route): step 1/1. The sequence is that of Urease subunit beta from Agrobacterium fabrum (strain C58 / ATCC 33970) (Agrobacterium tumefaciens (strain C58)).